Consider the following 315-residue polypeptide: Calumenin (315 aa).

The signal sequence occupies residues 1–19 (MDLRQFLMCLSLCTAFALS). Tyr47 bears the Phosphotyrosine mark. Thr65 bears the Phosphothreonine mark. EF-hand domains lie at 68 to 103 (ESKEKLGMIVDKIDTDKDGFVTEGELKSRIKHAQKK), 104 to 139 (YIYDNVENQWQEFDMNQDGLISWDEYRNVTYGTYLD), 151 to 186 (PIMVRDERRFKMADQDGDLIATKEEFTAFLHPEEYD), 188 to 223 (MKDIVLQETMEDIDQNADGFIDLEEYIGDMYSHDGN), 229 to 264 (WVKTEREQFVEFRDKNRDGKMDKEETKDWILPSDYD), and 265 to 300 (HAEAEARHLVYESDQDKDGKLTKEEIVDKYDLFVGS). At Ser69 the chain carries Phosphoserine. Residues Asp81, Asp83, Asp85, Glu92, Asp117, Asn119, Asp121, and Glu128 each contribute to the Ca(2+) site. Asn131 carries N-linked (GlcNAc...) asparagine glycosylation. Ca(2+) is bound by residues Asp164, Asp166, Asp168, Glu175, Asp201, Asn203, Asp205, Glu212, Asp242, Asn244, Asp246, Lys248, and Glu253. Thr254 carries the post-translational modification Phosphothreonine. Ser261 and Ser277 each carry phosphoserine. Positions 278, 280, 282, 284, and 289 each coordinate Ca(2+). The Prevents secretion from ER motif lies at 312–315 (HDEF).

The protein belongs to the CREC family. Binds crotoxin. Interacts with GGCX.

It localises to the endoplasmic reticulum membrane. The protein localises to the golgi apparatus. The protein resides in the secreted. Its subcellular location is the melanosome. It is found in the sarcoplasmic reticulum lumen. Its function is as follows. Involved in regulation of vitamin K-dependent carboxylation of multiple N-terminal glutamate residues. Seems to inhibit gamma-carboxylase GGCX. Binds 7 calcium ions with a low affinity. The chain is Calumenin (Calu) from Rattus norvegicus (Rat).